Here is a 140-residue protein sequence, read N- to C-terminus: Putative pre-16S rRNA nuclease (140 aa).

It belongs to the YqgF nuclease family.

It is found in the cytoplasm. In terms of biological role, could be a nuclease involved in processing of the 5'-end of pre-16S rRNA. The sequence is that of Putative pre-16S rRNA nuclease from Moorella thermoacetica (strain ATCC 39073 / JCM 9320).